The sequence spans 225 residues: 7-cyano-7-deazaguanine synthase (225 aa).

Phe10–Ala20 contacts ATP. Residues Cys190, Cys205, Cys208, and Cys211 each contribute to the Zn(2+) site.

It belongs to the QueC family. Requires Zn(2+) as cofactor.

It catalyses the reaction 7-carboxy-7-deazaguanine + NH4(+) + ATP = 7-cyano-7-deazaguanine + ADP + phosphate + H2O + H(+). Its pathway is purine metabolism; 7-cyano-7-deazaguanine biosynthesis. In terms of biological role, catalyzes the ATP-dependent conversion of 7-carboxy-7-deazaguanine (CDG) to 7-cyano-7-deazaguanine (preQ(0)). This chain is 7-cyano-7-deazaguanine synthase, found in Helicobacter acinonychis (strain Sheeba).